The primary structure comprises 803 residues: 3',5'-cyclic-AMP phosphodiesterase 4D (803 aa).

Residues 1–103 form a disordered region; it reads MEAEGSSVPA…SGASRVRHRG (103 aa). Residues His52 and His56 each carry the phosphoserine modification. The segment covering 58-85 has biased composition (pro residues); sequence PPPPPPSPQPQLQPPPPPPLPPPPPPPG. Ser137, Ser294, Ser296, Ser343, and Ser370 each carry phosphoserine. The disordered stretch occupies residues 338-358; that stretch reads EVEIPSPTQKEKEKKKRPMSQ. Positions 381–710 constitute a PDEase domain; sequence VKTEQEDVLA…EWYQSTIPQS (330 aa). Lys382 participates in a covalent cross-link: Glycyl lysine isopeptide (Lys-Gly) (interchain with G-Cter in SUMO). His457 (proton donor) is an active-site residue. Residue His457 coordinates 3',5'-cyclic AMP. Residue His457 participates in AMP binding. Zn(2+) contacts are provided by His461, His497, Asp498, and Asp615. AMP contacts are provided by Asp498, Asp615, Asn618, Gln666, and Phe669. Position 498 (Asp498) interacts with Mg(2+). Asp498 lines the Mn(2+) pocket. 3',5'-cyclic AMP is bound by residues Gln666 and Phe669. Disordered stretches follow at residues 705–724 and 732–803; these read STIPQSPSPAPDDQEDGRQG and ELTL…CPDT. The span at 757-768 shows a compositional bias: polar residues; that stretch reads CSDSKTLCTQDS. The segment covering 774-789 has biased composition (acidic residues); sequence PLDEQVEEEAVAEEES.

Belongs to the cyclic nucleotide phosphodiesterase family. PDE4 subfamily. As to quaternary structure, homodimer for the long isoforms. Isoforms with truncated N-termini are monomeric. Binds ARRB2. Isoform 33 is part of a ternary complex containing PRKAR2A, PRKAR2B and AKAP9. Identified in a complex composed of RYR1, PDE4D, PKA, FKBP1A and protein phosphatase 1 (PP1). Interacts with PDE4DIP. Isoform 5 interacts (via N-terminal region) with SHANK2 (via proline-rich region); the interaction is increased in a PKA-dependent manner. Isoform 33, isoform 4, isoform 7, isoform 8 and isoform 9 but not isoform 32 and isoform 6 interact with SHANK2. Isoform 31 interacts weakly with SHANK2. It depends on Zn(2+) as a cofactor. Requires Mg(2+) as cofactor. The cofactor is Mn(2+). Isoform 1 and isoform 9 are rapidly activated by PKA through phosphorylation. Long isoforms that share a conserved PKA phosphorylation site in the N-terminus are also activated. Post-translationally, sumoylation of long isoforms by PIAS4 augments their activation by PKA phosphorylation and represses their inhibition by ERK phosphorylation. Expressed in epithelial cells. Isoform 33, isoform 4, isoform 5 and isoform 9 are expressed in brain. Isoform 33, isoform 5, isoform 8 and isoform 9 are expressed in heart (at protein level). Isoform 4 and isoform 6 are strongly expressed in cortex and cerebellum. Isoform 7 is strongly expressed in cortex and testis; weakly expressed in kidney, lung, spleen and cerebellum. Isoform 8 is strongly expressed in lung, heart and liver. Isoform 31, isoform 32, isoform 33, isoform 5 and isoform 9 are widely distributed.

It is found in the apical cell membrane. It localises to the cytoplasm. The protein localises to the membrane. Its subcellular location is the cytoskeleton. The protein resides in the microtubule organizing center. It is found in the centrosome. The catalysed reaction is 3',5'-cyclic AMP + H2O = AMP + H(+). It functions in the pathway purine metabolism; 3',5'-cyclic AMP degradation; AMP from 3',5'-cyclic AMP: step 1/1. With respect to regulation, activated by phosphatidic acid. Inhibited by rolipram. In terms of biological role, hydrolyzes the second messenger cAMP, which is a key regulator of many important physiological processes. The chain is 3',5'-cyclic-AMP phosphodiesterase 4D (Pde4d) from Rattus norvegicus (Rat).